A 113-amino-acid chain; its full sequence is Ribosome-binding factor A (113 aa).

Belongs to the RbfA family. As to quaternary structure, monomer. Binds 30S ribosomal subunits, but not 50S ribosomal subunits or 70S ribosomes.

The protein localises to the cytoplasm. One of several proteins that assist in the late maturation steps of the functional core of the 30S ribosomal subunit. Associates with free 30S ribosomal subunits (but not with 30S subunits that are part of 70S ribosomes or polysomes). Required for efficient processing of 16S rRNA. May interact with the 5'-terminal helix region of 16S rRNA. This chain is Ribosome-binding factor A, found in Oceanobacillus iheyensis (strain DSM 14371 / CIP 107618 / JCM 11309 / KCTC 3954 / HTE831).